We begin with the raw amino-acid sequence, 120 residues long: Large ribosomal subunit protein uL22 (120 aa).

This sequence belongs to the universal ribosomal protein uL22 family. Part of the 50S ribosomal subunit.

Functionally, this protein binds specifically to 23S rRNA; its binding is stimulated by other ribosomal proteins, e.g. L4, L17, and L20. It is important during the early stages of 50S assembly. It makes multiple contacts with different domains of the 23S rRNA in the assembled 50S subunit and ribosome. In terms of biological role, the globular domain of the protein is located near the polypeptide exit tunnel on the outside of the subunit, while an extended beta-hairpin is found that lines the wall of the exit tunnel in the center of the 70S ribosome. This chain is Large ribosomal subunit protein uL22, found in Corynebacterium efficiens (strain DSM 44549 / YS-314 / AJ 12310 / JCM 11189 / NBRC 100395).